Reading from the N-terminus, the 240-residue chain is Sugar fermentation stimulation protein homolog (240 aa).

This sequence belongs to the SfsA family.

In Saccharolobus islandicus (strain M.14.25 / Kamchatka #1) (Sulfolobus islandicus), this protein is Sugar fermentation stimulation protein homolog.